The sequence spans 268 residues: Chymotrypsin-C (268 aa).

Positions 1–16 (MLGITVLAAILACASS) are cleaved as a signal peptide. A propeptide spans 17–29 (CGDPTFPPNLSAR) (activation peptide). 5 cysteine pairs are disulfide-bonded: Cys17-Cys141, Cys59-Cys75, Cys155-Cys222, Cys186-Cys202, and Cys212-Cys243. An N-linked (GlcNAc...) asparagine glycan is attached at Asn25. The region spanning 30–267 (VVGGEDAVPN…YIDWIKEKIQ (238 aa)) is the Peptidase S1 domain. His74 functions as the Charge relay system in the catalytic mechanism. Asn79 and Asn90 each carry an N-linked (GlcNAc...) asparagine glycan. Asp121 functions as the Charge relay system in the catalytic mechanism. N-linked (GlcNAc...) asparagine glycosylation occurs at Asn182. Ser216 serves as the catalytic Charge relay system.

This sequence belongs to the peptidase S1 family. Elastase subfamily.

It catalyses the reaction Preferential cleavage: Leu-|-Xaa, Tyr-|-Xaa, Phe-|-Xaa, Met-|-Xaa, Trp-|-Xaa, Gln-|-Xaa, Asn-|-Xaa.. Functionally, regulates activation and degradation of trypsinogens and procarboxypeptidases by targeting specific cleavage sites within their zymogen precursors. Has chymotrypsin-type protease activity and hypocalcemic activity. Cleaves TRY4 and TRY5 and thereby inhibits their autoactivation. The protein is Chymotrypsin-C (Ctrc) of Mus musculus (Mouse).